Consider the following 426-residue polypeptide: D-tagatose-1,6-bisphosphate aldolase subunit KbaZ (426 aa).

It belongs to the GatZ/KbaZ family. KbaZ subfamily. In terms of assembly, forms a complex with KbaY.

The protein operates within carbohydrate metabolism; D-tagatose 6-phosphate degradation; D-glyceraldehyde 3-phosphate and glycerone phosphate from D-tagatose 6-phosphate: step 2/2. Functionally, component of the tagatose-1,6-bisphosphate aldolase KbaYZ that is required for full activity and stability of the Y subunit. Could have a chaperone-like function for the proper and stable folding of KbaY. When expressed alone, KbaZ does not show any aldolase activity. This is D-tagatose-1,6-bisphosphate aldolase subunit KbaZ from Escherichia coli O127:H6 (strain E2348/69 / EPEC).